The chain runs to 333 residues: Protein SEEDLING LETHAL 1, chloroplastic (333 aa).

The transit peptide at 1-55 (MQQEALSFLSSSLPSLHHNFPSLSRLRFNNFPALSFKPNTSSSSSSFFKSPDIPS) directs the protein to the chloroplast. Positions 38–67 (PNTSSSSSSFFKSPDIPSLSSTTTTTTTTE) are disordered.

The protein belongs to the mTERF family. Self-interacts. Associates with the plastid-encoded RNA polymerase (PEP) complex. Interacts directly with PTAC7/PAP12, PTAC12/HMR/PAP5 and PTAC14/PAP7. Expressed in green aerial tissues such as cotyledons, leaves, flowers and siliques, but not in roots.

The protein localises to the plastid. It localises to the chloroplast stroma. The protein resides in the chloroplast nucleoid. Functionally, transcription termination factor required for chloroplast gene expression and protein synthesis in chloroplasts. Necessary for chloroplast photosynthetic complexes assembly by modulating the accumulation of photosynthetic proteins. Essential for embryogenesis. This is Protein SEEDLING LETHAL 1, chloroplastic from Arabidopsis thaliana (Mouse-ear cress).